The chain runs to 228 residues: Transcription repressor OFP8 (228 aa).

Low complexity-rich tracts occupy residues M1 to R14, A54 to S79, and E92 to Q101. Disordered stretches follow at residues M1–I21 and S36–E143. Residues R107–A120 are compositionally biased toward basic residues. The region spanning V157–R216 is the OVATE domain.

Interacts with GSK2. In terms of processing, phosphorylated on serine and threonine residues by GSK2. Dephosphorylated during response to brassinosteroid. As to expression, expressed in roots, stems, stem nodes, young leaves, leaf sheaths, lamina joints, young spikelets, inflorescences, stamens and ovaries, embryos and seeds.

The protein resides in the nucleus. The protein localises to the cytoplasm. Its function is as follows. Probable transcriptional repressor that regulates multiple aspects of plant growth and development, partly through brassinosteroid (BR) signaling pathway. Acts downstream of the kinase GSK2, a negative regulator of BR signaling. The sequence is that of Transcription repressor OFP8 from Oryza sativa subsp. japonica (Rice).